The primary structure comprises 552 residues: CTP synthase (552 aa).

Residues 1–270 (MTKYVFVTGG…DRIICEELKL (270 aa)) are amidoligase domain. A CTP-binding site is contributed by S13. S13 provides a ligand contact to UTP. ATP contacts are provided by residues 14–19 (SLGKGI) and D71. Positions 71 and 144 each coordinate Mg(2+). CTP is bound by residues 151–153 (DIE), 191–196 (KTKPTQ), and K227. UTP is bound by residues 191 to 196 (KTKPTQ) and K227. A Glutamine amidotransferase type-1 domain is found at 295–547 (TIGMVGKYVD…VEAALANKQA (253 aa)). G356 contacts L-glutamine. Catalysis depends on C383, which acts as the Nucleophile; for glutamine hydrolysis. L-glutamine contacts are provided by residues 384-387 (LGMQ), E407, and R473. Residues H520 and E522 contribute to the active site.

Belongs to the CTP synthase family. In terms of assembly, homotetramer.

It catalyses the reaction UTP + L-glutamine + ATP + H2O = CTP + L-glutamate + ADP + phosphate + 2 H(+). It carries out the reaction L-glutamine + H2O = L-glutamate + NH4(+). The catalysed reaction is UTP + NH4(+) + ATP = CTP + ADP + phosphate + 2 H(+). Its pathway is pyrimidine metabolism; CTP biosynthesis via de novo pathway; CTP from UDP: step 2/2. Allosterically activated by GTP, when glutamine is the substrate; GTP has no effect on the reaction when ammonia is the substrate. The allosteric effector GTP functions by stabilizing the protein conformation that binds the tetrahedral intermediate(s) formed during glutamine hydrolysis. Inhibited by the product CTP, via allosteric rather than competitive inhibition. Functionally, catalyzes the ATP-dependent amination of UTP to CTP with either L-glutamine or ammonia as the source of nitrogen. Regulates intracellular CTP levels through interactions with the four ribonucleotide triphosphates. This Burkholderia cenocepacia (strain ATCC BAA-245 / DSM 16553 / LMG 16656 / NCTC 13227 / J2315 / CF5610) (Burkholderia cepacia (strain J2315)) protein is CTP synthase.